The following is a 376-amino-acid chain: Tetraacyldisaccharide 4'-kinase (376 aa).

Position 51–58 (51–58 (AVGGTGKT)) interacts with ATP.

It belongs to the LpxK family.

The enzyme catalyses a lipid A disaccharide + ATP = a lipid IVA + ADP + H(+). It functions in the pathway glycolipid biosynthesis; lipid IV(A) biosynthesis; lipid IV(A) from (3R)-3-hydroxytetradecanoyl-[acyl-carrier-protein] and UDP-N-acetyl-alpha-D-glucosamine: step 6/6. In terms of biological role, transfers the gamma-phosphate of ATP to the 4'-position of a tetraacyldisaccharide 1-phosphate intermediate (termed DS-1-P) to form tetraacyldisaccharide 1,4'-bis-phosphate (lipid IVA). The chain is Tetraacyldisaccharide 4'-kinase from Bacteroides fragilis (strain YCH46).